The chain runs to 154 residues: Nuclear cap-binding protein subunit 2 (154 aa).

MRNA-binding positions include Tyr-10, Tyr-33, 102 to 106 (RVDWD), 113 to 117 (RQYGR), and 123 to 124 (QV). The RRM domain occupies 30 to 108 (CTLYVGNLSF…RLIRVDWDAG (79 aa)).

This sequence belongs to the RRM NCBP2 family. In terms of assembly, component of the nuclear cap-binding complex (CBC), a heterodimer composed of Cbp80 and Cbp20 that interacts with m7GpppG-capped RNA. Interacts with Ars2.

It is found in the nucleus. Its function is as follows. Component of the cap-binding complex (CBC), which binds co-transcriptionally to the 5' cap of pre-mRNAs and is involved in various processes such as pre-mRNA splicing and RNA-mediated gene silencing (RNAi). The CBC complex is involved in miRNA-mediated RNA interference via its interaction with Ars2 and is required for primary microRNAs (miRNAs) processing. Also involved in innate immunity via the short interfering RNAs (siRNAs) processing machinery by restricting the viral RNA production. In the CBC complex, Cbp20 recognizes and binds capped RNAs (m7GpppG-capped RNA) but requires Cbp80 to stabilize the movement of its N-terminal loop and lock the CBC into a high affinity cap-binding state with the cap structure. This Drosophila erecta (Fruit fly) protein is Nuclear cap-binding protein subunit 2 (Cbp20).